The sequence spans 41 residues: MTGSYAASFLPWIMIPVTCWLFPVVVMGLLFIYIESDAPST.

The helical transmembrane segment at 12–32 (WIMIPVTCWLFPVVVMGLLFI) threads the bilayer.

This sequence belongs to the PsaI family.

The protein localises to the cellular thylakoid membrane. May help in the organization of the PsaL subunit. This chain is Photosystem I reaction center subunit VIII, found in Cyanothece sp. (strain PCC 7425 / ATCC 29141).